Consider the following 171-residue polypeptide: 3-hydroxydecanoyl-[acyl-carrier-protein] dehydratase (171 aa).

H70 is an active-site residue.

This sequence belongs to the thioester dehydratase family. FabA subfamily. In terms of assembly, homodimer.

Its subcellular location is the cytoplasm. The catalysed reaction is a (3R)-hydroxyacyl-[ACP] = a (2E)-enoyl-[ACP] + H2O. It catalyses the reaction (3R)-hydroxydecanoyl-[ACP] = (2E)-decenoyl-[ACP] + H2O. The enzyme catalyses (2E)-decenoyl-[ACP] = (3Z)-decenoyl-[ACP]. Its pathway is lipid metabolism; fatty acid biosynthesis. Necessary for the introduction of cis unsaturation into fatty acids. Catalyzes the dehydration of (3R)-3-hydroxydecanoyl-ACP to E-(2)-decenoyl-ACP and then its isomerization to Z-(3)-decenoyl-ACP. Can catalyze the dehydratase reaction for beta-hydroxyacyl-ACPs with saturated chain lengths up to 16:0, being most active on intermediate chain length. The protein is 3-hydroxydecanoyl-[acyl-carrier-protein] dehydratase of Pseudomonas fluorescens (strain ATCC BAA-477 / NRRL B-23932 / Pf-5).